The chain runs to 251 residues: HTH-type transcriptional regulator UlaR (251 aa).

Positions 3 to 58 constitute an HTH deoR-type domain; the sequence is EAQRHQILLEMLAQLGFVTVEKVVERLGISPATARRDINKLDERGKLKKVRNGAEA. The H-T-H motif DNA-binding region spans 20–39; the sequence is VTVEKVVERLGISPATARRD.

It is found in the cytoplasm. Functionally, represses ulaG and the ulaABCDEF operon. This chain is HTH-type transcriptional regulator UlaR, found in Shigella sonnei (strain Ss046).